The primary structure comprises 482 residues: Transcription factor Sox-9 (482 aa).

Disordered regions lie at residues 1 to 66 and 160 to 274; these read MNLL…ETED and RLRI…FRDV. Over residues 30–41 the composition is skewed to low complexity; it reads SAGSPCPSGSGS. The segment covering 42–52 has biased composition (polar residues); the sequence is DTENTRPQENT. Basic and acidic residues-rich tracts occupy residues 56 to 66 and 160 to 174; these read GDPELKKETED and RLRI…DYKY. Residue K61 forms a Glycyl lysine isopeptide (Lys-Gly) (interchain with G-Cter in SUMO) linkage. The interval 63 to 103 is dimerization (DIM); it reads ETEDEKFPVCIREAVSQVLKGYDWTLVPMPVRVNGSSKSKP. Positions 63-103 are PQA; that stretch reads ETEDEKFPVCIREAVSQVLKGYDWTLVPMPVRVNGSSKSKP. The HMG box DNA-binding region spans 105–173; the sequence is VKRPMNAFMV…QHKKDHPDYK (69 aa). Over residues 211–220 the composition is skewed to polar residues; it reads SPHSASSMSE. A transactivation domain (TAM) region spans residues 224-308; sequence PGEHSGQSQG…LPPNGHPGVG (85 aa). Short sequence motifs (9aaTAD) lie at residues 276–285 and 291–299; these read IGELSSEVIS and DVNEFDQYL. Residues 295-395 are disordered; sequence FDQYLPPNGH…HSPQQLNYSS (101 aa). Composition is skewed to polar residues over residues 308 to 326 and 351 to 366; these read GSTQ…TPSA and HSLS…SQQR. The segment at 366–482 is transactivation domain (TAC); the sequence is RTHIKTEQLS…QPVYTQLTRP (117 aa). K370 participates in a covalent cross-link: Glycyl lysine isopeptide (Lys-Gly) (interchain with G-Cter in SUMO). Residues 375–390 show a composition bias toward low complexity; that stretch reads SPSHYSDQQQQHSPQQ. A 9aaTAD 3 motif is present at residues 433-441; the sequence is SGLYSNFSY. Residues 448–482 are disordered; that stretch reads PMYTPIADTTGVPSIPQTHSPQHWEQPVYTQLTRP. Residues 458-482 show a composition bias toward polar residues; sequence GVPSIPQTHSPQHWEQPVYTQLTRP.

In terms of assembly, interacts with the sumoylation factors ube2i/ubc9 and sumo1. In terms of processing, sumoylated. Lys-370 is the major site of sumoylation, although sumoylation at Lys-61 also occurs. Sumoylation plays a key role in regulating formation of the neural crest and otic placode. Expressed in both male and female gonads from after metamorphosis through to adult stages. In the testis, expression is restricted to the supporting Sertoli-like cells. Conversely in the ovary, expression is localized to primary oocytes (at protein level). In developing limbs, expressed before chrondrocytes form (stage 52 tadpoles) and throughout the cartilaginous anlagen until stage 56, after which expression ceases in the enlarged cells of the diaphysis. At later stages, expression continues in the chondrocytes of the epiphysis and metaphysis, and weak expression is seen in most of the diaphysis.

It localises to the nucleus. The protein localises to the cytoplasm. In terms of biological role, transcription factor that plays a key role in chondrocytes differentiation and skeletal development. Specifically binds the 5'-ACAAAG-3' DNA motif present in enhancers and super-enhancers and promotes expression of genes important for chondrogenesis, including COL2A1. Plays a central role in successive steps of chondrocyte differentiation. Absolutely required for precartilaginous condensation, the first step in chondrogenesis during which skeletal progenitors differentiate into prechondrocytes. Together with SOX5 and SOX6, required for overt chondrogenesis when condensed prechondrocytes differentiate into early stage chondrocytes, the second step in chondrogenesis. Later, required to direct hypertrophic maturation and block osteoblast differentiation of growth plate chondrocytes: maintains chondrocyte columnar proliferation, delays prehypertrophy and then prevents osteoblastic differentiation of chondrocytes. Also required for chondrocyte hypertrophy, both indirectly, by keeping the lineage fate of chondrocytes, and directly, by remaining present in upper hypertrophic cells. Low lipid levels are the main nutritional determinant for chondrogenic commitment of skeletal progenitor cells: when lipids levels are low, FOXO transcription factors promote expression of SOX9, which induces chondrogenic commitment and suppresses fatty acid oxidation. In addition to cartilage development, also acts as a regulator of proliferation and differentiation in epithelial stem/progenitor cells. Unlikely to play a role in sex determination but may function during testicular and ovarian differentiation. This chain is Transcription factor Sox-9, found in Xenopus tropicalis (Western clawed frog).